The sequence spans 97 residues: Nuclear protein 2 (97 aa).

Positions 76–97 are disordered; the sequence is LLNGQRKRRQRQLHPKMRTRLT. The span at 80 to 97 shows a compositional bias: basic residues; it reads QRKRRQRQLHPKMRTRLT.

This sequence belongs to the NUPR family.

Its subcellular location is the nucleus. Acts as a transcriptional repressor by inhibiting gene expression at the NUPR1 promoter in a p53/TP53-dependent manner in cancer cells. Involved in the G1 cell cycle arrest, and in a decrease in cell viability and cell proliferation. Plays a role as a negative regulator of the protumoral factor NUPR1. The polypeptide is Nuclear protein 2 (Homo sapiens (Human)).